A 394-amino-acid chain; its full sequence is Elongation factor Tu (394 aa).

Positions 10–204 (KPHVNVGTIG…ALDSYIPEPE (195 aa)) constitute a tr-type G domain. Residues 19 to 26 (GHVDHGKT) form a G1 region. 19 to 26 (GHVDHGKT) is a binding site for GTP. A Mg(2+)-binding site is contributed by T26. The interval 60 to 64 (GITIS) is G2. Positions 81 to 84 (DCPG) are G3. Residues 81–85 (DCPGH) and 136–139 (NKCD) each bind GTP. The G4 stretch occupies residues 136–139 (NKCD). The segment at 174–176 (SAL) is G5.

It belongs to the TRAFAC class translation factor GTPase superfamily. Classic translation factor GTPase family. EF-Tu/EF-1A subfamily. In terms of assembly, monomer.

It localises to the cytoplasm. The enzyme catalyses GTP + H2O = GDP + phosphate + H(+). GTP hydrolase that promotes the GTP-dependent binding of aminoacyl-tRNA to the A-site of ribosomes during protein biosynthesis. This Alteromonas mediterranea (strain DSM 17117 / CIP 110805 / LMG 28347 / Deep ecotype) protein is Elongation factor Tu.